Reading from the N-terminus, the 406-residue chain is Argininosuccinate synthase (406 aa).

Residues alanine 14 to serine 22 and alanine 41 each bind ATP. Tyrosine 92 and serine 97 together coordinate L-citrulline. Residue glycine 122 coordinates ATP. Residues threonine 124, asparagine 128, and aspartate 129 each contribute to the L-aspartate site. L-citrulline is bound at residue asparagine 128. 5 residues coordinate L-citrulline: arginine 132, serine 181, serine 190, glutamate 266, and tyrosine 278.

Belongs to the argininosuccinate synthase family. Type 1 subfamily. Homotetramer.

The protein resides in the cytoplasm. The catalysed reaction is L-citrulline + L-aspartate + ATP = 2-(N(omega)-L-arginino)succinate + AMP + diphosphate + H(+). It participates in amino-acid biosynthesis; L-arginine biosynthesis; L-arginine from L-ornithine and carbamoyl phosphate: step 2/3. The chain is Argininosuccinate synthase from Geobacter sulfurreducens (strain ATCC 51573 / DSM 12127 / PCA).